The primary structure comprises 896 residues: Vacuolar zinc transporter TgZnT (896 aa).

Residues 1 to 472 (MPFSCFVFSQ…ETGTQRARRK (472 aa)) are Cytoplasmic-facing. Positions 82–91 (VLSSRGDESV) are enriched in basic and acidic residues. Disordered regions lie at residues 82–104 (VLSS…SPGF), 205–227 (MKEI…RPCA), and 255–329 (SSSC…SSAS). Composition is skewed to low complexity over residues 210–225 (SPRS…SSRP) and 255–266 (SSSCCSRSNSSS). A compositionally biased stretch (basic and acidic residues) spans 303-322 (VHERRAEATCCAPRDRHGGD). A helical transmembrane segment spans residues 473 to 493 (LVMASMVCCVFMFVEIVAGVL). The Vacuolar segment spans residues 494–502 (ANSLALMTD). Residues 503–523 (ASHLLSDLCAFLISLFALWVS) traverse the membrane as a helical segment. At 524 to 539 (ELKGNPSMSFGYHRAE) the chain is on the cytoplasmic side. The chain crosses the membrane as a helical span at residues 540-560 (ILGALLSVFLIWVLTAVLIYA). Residues 561–573 (ACFRLVDPPQVDG) are Vacuolar-facing. A helical transmembrane segment spans residues 574 to 594 (ELMFWTALLGTLANLFMTHIL). The Cytoplasmic segment spans residues 595 to 737 (KVHSHGIGQV…YENMNLRAAY (143 aa)). The segment at 621-707 (LQASSSSPEK…RPFSASSAGS (87 aa)) is disordered. Basic and acidic residues predominate over residues 656–680 (RDAEAGRDAEAGRDAEAGRDAETGR). A helical transmembrane segment spans residues 738-758 (IHALGDLLQNIGVMIASALIW). Residues 759 to 762 (WRPD) lie on the Vacuolar side of the membrane. A helical membrane pass occupies residues 763 to 783 (WAIADPICTFIFSIFVLFTTL). Residues 784 to 896 (SILKEALNVL…CSDPMKVFRR (113 aa)) are Cytoplasmic-facing.

This sequence belongs to the cation diffusion facilitator (CDF) transporter (TC 2.A.4) family. SLC30A subfamily.

Its subcellular location is the vacuole membrane. The protein localises to the cytoplasmic vesicle membrane. Functionally, vacuolar zinc transporter that is probably involved in the transfer of zinc ions from the cytosol to the vacuole for intracellular storage. Plays an essential role in extracellular zinc tolerance. In Toxoplasma gondii (strain ATCC 50853 / GT1), this protein is Vacuolar zinc transporter TgZnT.